Here is a 465-residue protein sequence, read N- to C-terminus: Dihydrolipoyllysine-residue acetyltransferase component 5 of pyruvate dehydrogenase complex, chloroplastic (465 aa).

A chloroplast-targeting transit peptide spans 1–31 (MSRLLQTPFLPSVSLPTKTRSSVTGFRVKPR). A Lipoyl-binding domain is found at 39–114 (IREIFMPALS…PVGSAIALLA (76 aa)). At lysine 80 the chain carries N6-lipoyllysine. The segment at 123–148 (AKAKASGGGGGGDSKAPPASPPTAAV) is disordered. Residues 136–148 (SKAPPASPPTAAV) are compositionally biased toward low complexity. Residues 184–221 (VASPYAKKLAKELKVELAGLVGSGPMGRIVAKDVEAVA) enclose the Peripheral subunit-binding (PSBD) domain. Residue histidine 438 is part of the active site.

The protein belongs to the 2-oxoacid dehydrogenase family. (R)-lipoate is required as a cofactor.

The protein localises to the plastid. Its subcellular location is the chloroplast stroma. The enzyme catalyses N(6)-[(R)-dihydrolipoyl]-L-lysyl-[protein] + acetyl-CoA = N(6)-[(R)-S(8)-acetyldihydrolipoyl]-L-lysyl-[protein] + CoA. The pyruvate dehydrogenase complex catalyzes the overall conversion of pyruvate to acetyl-CoA and CO(2). It contains multiple copies of three enzymatic components: pyruvate dehydrogenase (E1), dihydrolipoamide acetyltransferase (E2) and lipoamide dehydrogenase (E3). The sequence is that of Dihydrolipoyllysine-residue acetyltransferase component 5 of pyruvate dehydrogenase complex, chloroplastic (EMB3003) from Arabidopsis thaliana (Mouse-ear cress).